The primary structure comprises 741 residues: NAD(P)H-quinone oxidoreductase subunit 5, chloroplastic (741 aa).

A run of 16 helical transmembrane segments spans residues 9–29, 40–60, 89–109, 125–145, 147–167, 185–205, 219–239, 258–278, 289–311, 327–347, 354–374, 396–416, 425–445, 549–569, 605–625, and 721–741; these read WIIP…LLLF, WAFQ…NLSI, IDPL…LVLI, FAYM…SNLI, IYIF…FWFT, GDFG…SFEF, NQVN…GAIA, TPIS…FLVA, HIMN…LALA, LGYM…FHLI, ALLF…VGYC, NSFL…CFWS, WLYS…TAFY, LFPI…GIPL, LFSV…YKPV, and YLFF…FLNL.

The protein belongs to the complex I subunit 5 family. As to quaternary structure, NDH is composed of at least 16 different subunits, 5 of which are encoded in the nucleus.

It is found in the plastid. The protein resides in the chloroplast thylakoid membrane. It catalyses the reaction a plastoquinone + NADH + (n+1) H(+)(in) = a plastoquinol + NAD(+) + n H(+)(out). The catalysed reaction is a plastoquinone + NADPH + (n+1) H(+)(in) = a plastoquinol + NADP(+) + n H(+)(out). NDH shuttles electrons from NAD(P)H:plastoquinone, via FMN and iron-sulfur (Fe-S) centers, to quinones in the photosynthetic chain and possibly in a chloroplast respiratory chain. The immediate electron acceptor for the enzyme in this species is believed to be plastoquinone. Couples the redox reaction to proton translocation, and thus conserves the redox energy in a proton gradient. This is NAD(P)H-quinone oxidoreductase subunit 5, chloroplastic (ndhF) from Symphyotrichum cordifolium (Heart-leaved aster).